Consider the following 461-residue polypeptide: Cysteine--tRNA ligase (461 aa).

Cys28 contacts Zn(2+). Positions 30 to 40 match the 'HIGH' region motif; that stretch reads ITVYDLCHIGH. Residues Cys209, His234, and Glu238 each contribute to the Zn(2+) site. The 'KMSKS' region motif lies at 266–270; it reads KMSKS. Lys269 serves as a coordination point for ATP.

This sequence belongs to the class-I aminoacyl-tRNA synthetase family. Monomer. Zn(2+) serves as cofactor.

Its subcellular location is the cytoplasm. It catalyses the reaction tRNA(Cys) + L-cysteine + ATP = L-cysteinyl-tRNA(Cys) + AMP + diphosphate. The sequence is that of Cysteine--tRNA ligase from Klebsiella pneumoniae (strain 342).